The following is a 129-amino-acid chain: Transcriptional activator protein (129 aa).

A Nuclear localization signal motif is present at residues 13-28; that stretch reads KAQHRAAKRRAIRRRR. A zinc finger lies at 33–50; that stretch reads CGCSIYIHIDCRNNGFTH. The disordered stretch occupies residues 73–118; the sequence is LFQDNQRRGSPLHQHQDIPLTNQVQPQPEESIGSPQGISQLPSMDD. The segment covering 91–114 has biased composition (polar residues); the sequence is PLTNQVQPQPEESIGSPQGISQLP. The tract at residues 115–129 is transactivation; the sequence is SMDDIDDSFWENLFK.

The protein belongs to the geminiviridae transcriptional activator protein family. As to quaternary structure, monomer. Homodimer. Homooligomer. Self-interaction correlates with nuclear localization and efficient activation of transcription. Monomers suppress local silencing by interacting with and inactivating host adenosine kinase (ADK) in the cytoplasm. Interacts with and inhibits host SNF1 kinase. Binds to ssDNA. Phosphorylated.

Its subcellular location is the host nucleus. The protein resides in the host cytoplasm. Functionally, strong activator of the late viral genes promoters. Enhances the expression of the capsid protein and nuclear shuttle protein. Acts as a suppressor of RNA-mediated gene silencing, also known as post-transcriptional gene silencing (PTGS), a mechanism of plant viral defense that limits the accumulation of viral RNAs. Suppresses the host RNA silencing by inhibiting adenosine kinase (ADK), a kinase involved in a general methylation pathway. Also suppresses the host basal defense by interacting with and inhibiting SNF1 kinase, a key regulator of cell metabolism implicated in innate antiviral defense. Determines pathogenicity. In Tomato golden mosaic virus (strain Yellow vein) (TGMV), this protein is Transcriptional activator protein.